A 206-amino-acid polypeptide reads, in one-letter code: Twist-related protein 1 (206 aa).

A compositionally biased stretch (low complexity) spans 1 to 18 (MMQDVSSSPVSPADDSLS). The interval 1-109 (MMQDVSSSPV…GGGSPQSYEE (109 aa)) is disordered. Residues 34–43 (RGARKRRSSR) are compositionally biased toward basic residues. Composition is skewed to gly residues over residues 48-65 (GSAGPGGATGGGIGGGDE) and 78-103 (SAGGGGGGGAGGGGGGGGGSSSGGGS). A bHLH domain is found at 112–163 (TQRVMANVRERQRTQSLNEAFAALRKIIPTLPSDKLSKIQTLKLAARYIDFL). Residues 165-195 (QVLQSDELDSKMASCSYVAHERLSYAFSVWR) are sufficient for transactivation activity.

As to quaternary structure, efficient DNA binding requires dimerization with another bHLH protein. Homodimer or heterodimer with E proteins such as TCF3. ID1 binds preferentially to TCF3 but does not interact efficiently with TWIST1 so ID1 levels control the amount of TCF3 available to dimerize with TWIST1 and thus determine the type of dimer formed. As to expression, subset of mesodermal cells.

The protein localises to the nucleus. Functionally, acts as a transcriptional regulator. Inhibits myogenesis by sequestrating E proteins, inhibiting trans-activation by MEF2, and inhibiting DNA-binding by MYOD1 through physical interaction. This interaction probably involves the basic domains of both proteins. Also represses expression of pro-inflammatory cytokines such as TNFA and IL1B. Regulates cranial suture patterning and fusion. Activates transcription as a heterodimer with E proteins. Regulates gene expression differentially, depending on dimer composition. Homodimers induce expression of FGFR2 and POSTN while heterodimers repress FGFR2 and POSTN expression and induce THBS1 expression. Heterodimerization is also required for osteoblast differentiation. Represses the activity of the circadian transcriptional activator: NPAS2-BMAL1 heterodimer. In Mus musculus (Mouse), this protein is Twist-related protein 1 (Twist1).